A 96-amino-acid chain; its full sequence is Uteroglobin (96 aa).

Positions 1–19 (MKIAITITVLMLSICCSSA) are cleaved as a signal peptide.

Belongs to the secretoglobin family. In terms of assembly, antiparallel homodimer; disulfide-linked. Interaction with LMBR1L is controversial. In terms of tissue distribution, club cells (nonciliated cells of the surface epithelium of the pulmonary airways).

Its subcellular location is the secreted. Its function is as follows. Binds phosphatidylcholine, phosphatidylinositol, polychlorinated biphenyls (PCB) and weakly progesterone, potent inhibitor of phospholipase A2. The protein is Uteroglobin (Scgb1a1) of Rattus norvegicus (Rat).